The sequence spans 124 residues: Small ribosomal subunit protein uS13 (124 aa).

The interval 95–124 is disordered; the sequence is GLPVNGQRTRTNARSSKGPRRTVAGKKKAR. The segment covering 100–109 has biased composition (polar residues); it reads GQRTRTNARS. A compositionally biased stretch (basic residues) spans 111-124; it reads KGPRRTVAGKKKAR.

The protein belongs to the universal ribosomal protein uS13 family. In terms of assembly, part of the 30S ribosomal subunit. Forms a loose heterodimer with protein S19. Forms two bridges to the 50S subunit in the 70S ribosome.

Functionally, located at the top of the head of the 30S subunit, it contacts several helices of the 16S rRNA. In the 70S ribosome it contacts the 23S rRNA (bridge B1a) and protein L5 of the 50S subunit (bridge B1b), connecting the 2 subunits; these bridges are implicated in subunit movement. Contacts the tRNAs in the A and P-sites. The protein is Small ribosomal subunit protein uS13 of Tropheryma whipplei (strain TW08/27) (Whipple's bacillus).